The following is a 404-amino-acid chain: Cysteine desulfurase IscS (404 aa).

Residues 75–76 (AT), N155, Q183, and 203–205 (SAH) each bind pyridoxal 5'-phosphate. K206 is subject to N6-(pyridoxal phosphate)lysine. Position 243 (T243) interacts with pyridoxal 5'-phosphate. C328 acts as the Cysteine persulfide intermediate in catalysis. C328 contacts [2Fe-2S] cluster.

It belongs to the class-V pyridoxal-phosphate-dependent aminotransferase family. NifS/IscS subfamily. Homodimer. Forms a heterotetramer with IscU, interacts with other sulfur acceptors. Requires pyridoxal 5'-phosphate as cofactor.

It is found in the cytoplasm. It catalyses the reaction (sulfur carrier)-H + L-cysteine = (sulfur carrier)-SH + L-alanine. It participates in cofactor biosynthesis; iron-sulfur cluster biosynthesis. Its function is as follows. Master enzyme that delivers sulfur to a number of partners involved in Fe-S cluster assembly, tRNA modification or cofactor biosynthesis. Catalyzes the removal of elemental sulfur atoms from cysteine to produce alanine. Functions as a sulfur delivery protein for Fe-S cluster synthesis onto IscU, an Fe-S scaffold assembly protein, as well as other S acceptor proteins. This Pseudomonas entomophila (strain L48) protein is Cysteine desulfurase IscS.